We begin with the raw amino-acid sequence, 362 residues long: P2Y purinoceptor 1 (362 aa).

The Extracellular segment spans residues 1 to 40 (MTEALISAALNGTQPELLAGGWAAGNASTKCSLTKTGFQF). N-linked (GlcNAc...) asparagine glycans are attached at residues N11 and N26. 2 disulfides stabilise this stretch: C31–C285 and C113–C191. K35 contributes to the ADP binding site. The chain crosses the membrane as a helical span at residues 41-63 (YYLPTVYILVFITGFLGNSVAIW). The Cytoplasmic portion of the chain corresponds to 64–76 (MFVFHMRPWSGIS). The helical transmembrane segment at 77 to 98 (VYMFNLALADFLYVLTLPALIF) threads the bilayer. At 99–114 (YYFNKTDWIFGDVMCK) the chain is on the extracellular side. N102 carries an N-linked (GlcNAc...) asparagine glycan. The chain crosses the membrane as a helical span at residues 115–136 (LQRFIFHVNLYGSILFLTCISV). Topologically, residues 137–155 (HRYTGVVHPLKSLGRLKKK) are cytoplasmic. A helical transmembrane segment spans residues 156–177 (NAVYVSSLVWALVVAVIAPILF). Residues 178–203 (YSGTGVRRNKTITCYDTTADEYLRSY) are Extracellular-facing. Residue N186 is glycosylated (N-linked (GlcNAc...) asparagine). Position 192-194 (192-194 (YDT)) interacts with ADP. The helical transmembrane segment at 204–226 (FVYSMCTTVFMFCIPFIVILGCY) threads the bilayer. Residues 227 to 249 (GLIVKALIYKDLDNSPLRRKSIY) lie on the Cytoplasmic side of the membrane. A helical transmembrane segment spans residues 250 to 273 (LVIIVLTVFAVSYLPFHVMKTLNL). Residues 272–276 (NLRAR), 292–295 (YATY), and R299 each bind ADP. Residues 274–292 (RARLDFQTPQMCAFNDKVY) are Extracellular-facing. A helical transmembrane segment spans residues 293 to 314 (ATYQVTRGLASLNSCVDPILYF). Topologically, residues 315–362 (LAGDTFRRRLSRATRKSSRRSEPNVQSKSEEMTLNILTEYKQNGDTSL) are cytoplasmic.

The protein belongs to the G-protein coupled receptor 1 family. As to expression, mainly found in blood, brain, and lung. To a lesser extent in stomach, gut and skeletal muscle.

It localises to the cell membrane. Its function is as follows. Receptor for extracellular adenine nucleotides such as ADP. In platelets, binding to ADP leads to mobilization of intracellular calcium ions via activation of phospholipase C, a change in platelet shape, and ultimately platelet aggregation. The chain is P2Y purinoceptor 1 (P2RY1) from Meleagris gallopavo (Wild turkey).